The primary structure comprises 259 residues: Short-chain dehydrogenase chry4 (259 aa).

Residues arginine 37, aspartate 55, asparagine 81, tyrosine 154, lysine 158, valine 185, and threonine 187 each contribute to the NADP(+) site. Tyrosine 154 (proton donor) is an active-site residue. Lysine 158 acts as the Lowers pKa of active site Tyr in catalysis.

It belongs to the short-chain dehydrogenases/reductases (SDR) family.

The protein operates within pigment biosynthesis. Its function is as follows. Short-chain dehydrogenase; part of the gene cluster that mediates the biosynthesis of the yellow pigment chrysogine. Pyruvic acid and anthranilic acid are likely substrates for the nonribosomal peptide synthetase chry1/NRPS14, with pyruvic acid adenylated by the first A domain and anthranilic acid by the second. If pyruvic acid and anthranilic acid are merged and released from chry1/NRPS14 by hydrolysis, a subsequent amidation would lead to 2-pyruvoylaminobenzamide. This process is probably catalyzed by the amidotransferase chry2 using glutamine as amino donor. The dehydrogenase chry5 that has a terminal berberine bridge domain for C-N cyclization could catalyze the cyclization of 2-pyruvoylaminobenzamide to yield acetyl-4(3H)-quinazolidinone. A final reduction of acetyl-4(3H)-quinazolidinone catalyzed by the oxidoreductase chry4 would result in chrysogine. The polypeptide is Short-chain dehydrogenase chry4 (Gibberella zeae (strain ATCC MYA-4620 / CBS 123657 / FGSC 9075 / NRRL 31084 / PH-1) (Wheat head blight fungus)).